The sequence spans 462 residues: Elongation factor 1-alpha 1 (462 aa).

At glycine 2 the chain carries N,N,N-trimethylglycine. Residues 5-242 (KTHINIVVIG…DCILPPTRPT (238 aa)) enclose the tr-type G domain. The G1 stretch occupies residues 14-21 (GHVDSGKS). 14 to 21 (GHVDSGKS) serves as a coordination point for GTP. Lysine 36 is subject to N6,N6,N6-trimethyllysine; alternate. Residue lysine 36 is modified to N6,N6-dimethyllysine; alternate. Lysine 36 bears the N6-methyllysine; alternate mark. At lysine 55 the chain carries N6,N6-dimethyllysine. Positions 70-74 (GITID) are G2. Position 79 is an N6,N6,N6-trimethyllysine; by EEF1AKMT1 (lysine 79). The G3 stretch occupies residues 91–94 (DAPG). 153–156 (NKMD) contacts GTP. A G4 region spans residues 153–156 (NKMD). Position 165 is an N6,N6,N6-trimethyllysine; alternate; by EEF1AKMT3 (lysine 165). Lysine 165 carries the post-translational modification N6,N6-dimethyllysine; alternate; by EEF1AKMT3. An N6-acetyllysine; alternate modification is found at lysine 165. Lysine 165 bears the N6-methyllysine; alternate; by EEF1AKMT3 mark. N6-acetyllysine is present on lysine 172. GTP is bound at residue 194-196 (SGW). Residues 194-196 (SGW) are G5. Lysine 273 is modified (N6-acetyllysine). Position 300 is a phosphoserine; by TGFBR1 (serine 300). 5-glutamyl glycerylphosphorylethanolamine is present on glutamate 301. Lysine 318 bears the N6,N6,N6-trimethyllysine; by EEF1AKMT2 mark. The residue at position 374 (glutamate 374) is a 5-glutamyl glycerylphosphorylethanolamine. Lysine 385 participates in a covalent cross-link: Glycyl lysine isopeptide (Lys-Gly) (interchain with G-Cter in ubiquitin). Lysine 392 bears the N6-acetyllysine; alternate mark. At lysine 392 the chain carries N6-succinyllysine; alternate. At threonine 432 the chain carries Phosphothreonine; by PASK. Residue lysine 439 is modified to N6-acetyllysine.

The protein belongs to the TRAFAC class translation factor GTPase superfamily. Classic translation factor GTPase family. EF-Tu/EF-1A subfamily. In terms of assembly, found in a nuclear export complex with XPO5, EEF1A1, Ran and aminoacylated tRNA. Interacts with PARP1 and TXK. Interacts with KARS1. May interact with ERGIC2. Interacts with IFIT1 (via TPR repeats 4-7). Interacts with DLC1, facilitating distribution to the membrane periphery and ruffles upon growth factor stimulation. Interacts with ZPR1; the interaction occurs in a epidermal growth factor (EGF)-dependent manner. Interacts with PPP1R16B. Interacts with SPHK1 and SPHK2; both interactions increase SPHK1 and SPHK2 kinase activity. Interacts with guanyl-nucleotide exchange factor EEF1B2. Interacts (via middle-region) with HTATIP2 (via N-terminus); the interaction is direct and competes with EEF1A1 binding to guanyl-nucleotide exchange factor EEF1B2, thereby inhibiting GDP for GTP exchange and reactivation of EEF1A1. Interacts with tRNA. ISGylated. In terms of processing, phosphorylated by TXK. Phosphorylation by PASK increases translation efficiency. Phosphorylated by ROCK2. Phosphorylation by TGFBR1 inhibits translation elongation. Post-translationally, trimethylated at Lys-79 by EEF1AKMT1. Methylated at Lys-165 by EEF1AKMT3, methylation by EEF1AKMT3 is dynamic as well as inducible by stress conditions, such as ER-stress, and plays a regulatory role on mRNA translation. Trimethylated at Lys-318 by EEF1AKMT2. Mono-, di-, and trimethylated at Lys-36 by EEF1AKMT4; trimethylated form is predominant. Methylation by EEF1AKMT4 contributes to the fine-tuning of translation rates for a subset of tRNAs. Trimethylated at Gly-2 by METTL13. Mono- and dimethylated at Lys-55 by METTL13; dimethylated form is predominant. Ubiquitinated at Lys-385 by RNF14 in response to ribosome collisions (ribosome stalling), leading to its degradation by the proteasome and rescue of stalled ribosomes.

The protein resides in the cytoplasm. It localises to the nucleus. Its subcellular location is the nucleolus. The protein localises to the cell membrane. It carries out the reaction GTP + H2O = GDP + phosphate + H(+). Its function is as follows. Translation elongation factor that catalyzes the GTP-dependent binding of aminoacyl-tRNA (aa-tRNA) to the A-site of ribosomes during the elongation phase of protein synthesis. Base pairing between the mRNA codon and the aa-tRNA anticodon promotes GTP hydrolysis, releasing the aa-tRNA from EEF1A1 and allowing its accommodation into the ribosome. The growing protein chain is subsequently transferred from the P-site peptidyl tRNA to the A-site aa-tRNA, extending it by one amino acid through ribosome-catalyzed peptide bond formation. Also plays a role in the positive regulation of IFNG transcription in T-helper 1 cells as part of an IFNG promoter-binding complex with TXK and PARP1. Also plays a role in cytoskeleton organization by promoting actin bundling. In Bos taurus (Bovine), this protein is Elongation factor 1-alpha 1 (EEF1A1).